Reading from the N-terminus, the 225-residue chain is Uracil-DNA glycosylase (225 aa).

Residue aspartate 65 is the Proton acceptor of the active site.

The protein belongs to the uracil-DNA glycosylase (UDG) superfamily. UNG family.

It is found in the cytoplasm. It carries out the reaction Hydrolyzes single-stranded DNA or mismatched double-stranded DNA and polynucleotides, releasing free uracil.. Its function is as follows. Excises uracil residues from the DNA which can arise as a result of misincorporation of dUMP residues by DNA polymerase or due to deamination of cytosine. In Bacillus cereus (strain B4264), this protein is Uracil-DNA glycosylase.